The following is a 64-amino-acid chain: uncharacterized protein (64 aa).

The protein localises to the mitochondrion. This is an uncharacterized protein from Marchantia polymorpha (Common liverwort).